The following is a 301-amino-acid chain: Fructokinase (301 aa).

Zn(2+) is bound by residues His165, Cys181, His184, and Cys187.

Belongs to the ROK (NagC/XylR) family. It depends on Mg(2+) as a cofactor.

The catalysed reaction is D-fructose + ATP = D-fructose 6-phosphate + ADP + H(+). With respect to regulation, inhibition by zinc ions. The protein is Fructokinase (frk) of Zymomonas mobilis subsp. mobilis (strain ATCC 31821 / ZM4 / CP4).